Consider the following 70-residue polypeptide: DNA-directed RNA polymerase subunit omega (70 aa).

This sequence belongs to the RNA polymerase subunit omega family. The RNAP catalytic core consists of 2 alpha, 1 beta, 1 beta' and 1 omega subunit. When a sigma factor is associated with the core the holoenzyme is formed, which can initiate transcription.

The catalysed reaction is RNA(n) + a ribonucleoside 5'-triphosphate = RNA(n+1) + diphosphate. In terms of biological role, promotes RNA polymerase assembly. Latches the N- and C-terminal regions of the beta' subunit thereby facilitating its interaction with the beta and alpha subunits. This chain is DNA-directed RNA polymerase subunit omega, found in Staphylococcus epidermidis (strain ATCC 12228 / FDA PCI 1200).